A 123-amino-acid chain; its full sequence is Small ribosomal subunit protein uS12 (123 aa).

D89 is subject to 3-methylthioaspartic acid.

It belongs to the universal ribosomal protein uS12 family. Part of the 30S ribosomal subunit. Contacts proteins S8 and S17. May interact with IF1 in the 30S initiation complex.

Functionally, with S4 and S5 plays an important role in translational accuracy. In terms of biological role, interacts with and stabilizes bases of the 16S rRNA that are involved in tRNA selection in the A site and with the mRNA backbone. Located at the interface of the 30S and 50S subunits, it traverses the body of the 30S subunit contacting proteins on the other side and probably holding the rRNA structure together. The combined cluster of proteins S8, S12 and S17 appears to hold together the shoulder and platform of the 30S subunit. The protein is Small ribosomal subunit protein uS12 of Methylobacterium nodulans (strain LMG 21967 / CNCM I-2342 / ORS 2060).